The primary structure comprises 331 residues: MFMKDILQSSECIEDQQNISMRPNLLDEFIGQSSVVSNLKIFIDAAYERKEPIDHILLYGPPGLGKTTLAHIIAKELKVNFRSTAGPLLSKAGDLAAILTNLQARDVLFIDEIHRLNRNIEEILYSAMEDFSLDIIVGEGCGARTLRVDIPPFTLIGATTRIGLLSNPLRDRFGIPMHLEFYSTEELTKVIKRAAKVIHTNISNNGAEEISLRSRGTPRIALRLLRRIRDFISVTKQDTITHEFADQALLRLGIDKLGLDRQDIKYLQFIYEANNPIGIDTISSALSEDTGNIEETIEPYLIKINFIQRTPRGRVITQKAISYLNEQTYNM.

The tract at residues 4–182 (KDILQSSECI…FGIPMHLEFY (179 aa)) is large ATPase domain (RuvB-L). Residues Arg22, Gly63, Lys66, Thr67, Thr68, 129–131 (EDF), Arg172, Tyr182, and Arg219 each bind ATP. Thr67 contributes to the Mg(2+) binding site. Residues 183–253 (STEELTKVIK…FADQALLRLG (71 aa)) form a small ATPAse domain (RuvB-S) region. The interval 256-331 (KLGLDRQDIK…SYLNEQTYNM (76 aa)) is head domain (RuvB-H). Arg309 and Arg314 together coordinate DNA.

The protein belongs to the RuvB family. As to quaternary structure, homohexamer. Forms an RuvA(8)-RuvB(12)-Holliday junction (HJ) complex. HJ DNA is sandwiched between 2 RuvA tetramers; dsDNA enters through RuvA and exits via RuvB. An RuvB hexamer assembles on each DNA strand where it exits the tetramer. Each RuvB hexamer is contacted by two RuvA subunits (via domain III) on 2 adjacent RuvB subunits; this complex drives branch migration. In the full resolvosome a probable DNA-RuvA(4)-RuvB(12)-RuvC(2) complex forms which resolves the HJ.

The protein localises to the cytoplasm. The enzyme catalyses ATP + H2O = ADP + phosphate + H(+). In terms of biological role, the RuvA-RuvB-RuvC complex processes Holliday junction (HJ) DNA during genetic recombination and DNA repair, while the RuvA-RuvB complex plays an important role in the rescue of blocked DNA replication forks via replication fork reversal (RFR). RuvA specifically binds to HJ cruciform DNA, conferring on it an open structure. The RuvB hexamer acts as an ATP-dependent pump, pulling dsDNA into and through the RuvAB complex. RuvB forms 2 homohexamers on either side of HJ DNA bound by 1 or 2 RuvA tetramers; 4 subunits per hexamer contact DNA at a time. Coordinated motions by a converter formed by DNA-disengaged RuvB subunits stimulates ATP hydrolysis and nucleotide exchange. Immobilization of the converter enables RuvB to convert the ATP-contained energy into a lever motion, pulling 2 nucleotides of DNA out of the RuvA tetramer per ATP hydrolyzed, thus driving DNA branch migration. The RuvB motors rotate together with the DNA substrate, which together with the progressing nucleotide cycle form the mechanistic basis for DNA recombination by continuous HJ branch migration. Branch migration allows RuvC to scan DNA until it finds its consensus sequence, where it cleaves and resolves cruciform DNA. This chain is Holliday junction branch migration complex subunit RuvB, found in Ehrlichia ruminantium (strain Gardel).